Reading from the N-terminus, the 150-residue chain is Bis(5'-adenosyl)-triphosphatase (150 aa).

The region spanning 2-109 (SFRFGQHLIK…LPRKAGDFPR (108 aa)) is the HIT domain. Substrate is bound by residues His8, Asn27, Gln83, and 89-92 (GQTV). The Histidine triad motif signature appears at 94-98 (HVHVH). His96 serves as the catalytic Tele-AMP-histidine intermediate. His98 lines the substrate pocket. Tyr114 carries the phosphotyrosine; by SRC modification. Tyr147 is subject to Phosphotyrosine.

In terms of assembly, homodimer. Interacts with UBE2I. Interacts with MDM2. Interacts with CTNNB1. Identified in a complex with CTNNB1 and LEF1. Post-translationally, phosphorylation at Tyr-114 by SRC is required for induction of apoptosis. Expressed in heart, brain, lung and skeletal muscle. Particularly strong expression in liver, testis and kidney, where it is confined to the tubular epithelium.

The protein resides in the cytoplasm. Its subcellular location is the nucleus. It localises to the mitochondrion. It carries out the reaction P(1),P(3)-bis(5'-adenosyl) triphosphate + H2O = AMP + ADP + 2 H(+). The catalysed reaction is adenosine 5'-phosphosulfate + H2O = sulfate + AMP + 2 H(+). It catalyses the reaction adenosine 5'-phosphosulfate + NH4(+) = adenosine 5'-phosphoramidate + sulfate + 2 H(+). The enzyme catalyses adenosine 5'-phosphoramidate + H2O = AMP + NH4(+). In terms of biological role, possesses dinucleoside triphosphate hydrolase activity. Cleaves P(1)-P(3)-bis(5'-adenosyl) triphosphate (Ap3A) to yield AMP and ADP. Can also hydrolyze P(1)-P(4)-bis(5'-adenosyl) tetraphosphate (Ap4A), but has extremely low activity with ATP. Exhibits adenylylsulfatase activity, hydrolyzing adenosine 5'-phosphosulfate to yield AMP and sulfate. Exhibits adenosine 5'-monophosphoramidase activity, hydrolyzing purine nucleotide phosphoramidates with a single phosphate group such as adenosine 5'monophosphoramidate (AMP-NH2) to yield AMP and NH2. Exhibits adenylylsulfate-ammonia adenylyltransferase, catalyzing the ammonolysis of adenosine 5'-phosphosulfate resulting in the formation of adenosine 5'-phosphoramidate. Also catalyzes the ammonolysis of adenosine 5-phosphorofluoridate and diadenosine triphosphate. Modulates transcriptional activation by CTNNB1 and thereby contributes to regulate the expression of genes essential for cell proliferation and survival, such as CCND1 and BIRC5. Plays a role in the induction of apoptosis via SRC and AKT1 signaling pathways. Inhibits MDM2-mediated proteasomal degradation of p53/TP53 and thereby plays a role in p53/TP53-mediated apoptosis. Induction of apoptosis depends on the ability of FHIT to bind P(1)-P(3)-bis(5'-adenosyl) triphosphate or related compounds, but does not require its catalytic activity. Functions as a tumor suppressor. The polypeptide is Bis(5'-adenosyl)-triphosphatase (Fhit) (Mus musculus (Mouse)).